Reading from the N-terminus, the 256-residue chain is Pimeloyl-[acyl-carrier protein] methyl ester esterase (256 aa).

In terms of domain architecture, AB hydrolase-1 spans 15-242 (HLVLLHGWGL…AAHAPFISHP (228 aa)). Substrate contacts are provided by residues Trp-22, 82–83 (SL), and 143–147 (FLALQ). Catalysis depends on Ser-82, which acts as the Nucleophile. Residues Asp-207 and His-235 contribute to the active site. His-235 provides a ligand contact to substrate.

The protein belongs to the AB hydrolase superfamily. Carboxylesterase BioH family. In terms of assembly, monomer.

Its subcellular location is the cytoplasm. The catalysed reaction is 6-carboxyhexanoyl-[ACP] methyl ester + H2O = 6-carboxyhexanoyl-[ACP] + methanol + H(+). Its pathway is cofactor biosynthesis; biotin biosynthesis. In terms of biological role, the physiological role of BioH is to remove the methyl group introduced by BioC when the pimeloyl moiety is complete. It allows to synthesize pimeloyl-ACP via the fatty acid synthetic pathway through the hydrolysis of the ester bonds of pimeloyl-ACP esters. The protein is Pimeloyl-[acyl-carrier protein] methyl ester esterase of Escherichia coli (strain 55989 / EAEC).